We begin with the raw amino-acid sequence, 296 residues long: NAD kinase (296 aa).

Asp-73 functions as the Proton acceptor in the catalytic mechanism. NAD(+)-binding positions include 73-74, Lys-78, 151-152, Arg-178, Asp-180, and 191-196; these read DG, NE, and TAHAMS.

It belongs to the NAD kinase family. The cofactor is a divalent metal cation.

Its subcellular location is the cytoplasm. The enzyme catalyses NAD(+) + ATP = ADP + NADP(+) + H(+). Functionally, involved in the regulation of the intracellular balance of NAD and NADP, and is a key enzyme in the biosynthesis of NADP. Catalyzes specifically the phosphorylation on 2'-hydroxyl of the adenosine moiety of NAD to yield NADP. The chain is NAD kinase from Francisella tularensis subsp. tularensis (strain FSC 198).